Consider the following 322-residue polypeptide: DNA repair and recombination protein RadA (322 aa).

An ATP-binding site is contributed by 105 to 112 (GMFGSGKT).

Belongs to the eukaryotic RecA-like protein family.

In terms of biological role, involved in DNA repair and in homologous recombination. Binds and assemble on single-stranded DNA to form a nucleoprotein filament. Hydrolyzes ATP in a ssDNA-dependent manner and promotes DNA strand exchange between homologous DNA molecules. The chain is DNA repair and recombination protein RadA from Methanococcus maripaludis (strain DSM 14266 / JCM 13030 / NBRC 101832 / S2 / LL).